The sequence spans 354 residues: MNGTEGPYFYIPMVNTTGIVRSPYDYPQYYLVNPAAYAALGAYMFFLILVGFPINFLTLYVTIEHKKLRTPLNYILLNLAVANLFMVFGGFTTTMYTSMHGYFVLGRLGCNLEGFFATLGGEIALWSLVVLAVERWMVVCKPISNFRFGENHAIMGLAMTWLMASACAVPPLVGWSRYIPEGMQCSCGVDYYTRAEGFNNESFVVYMFCCHFMIPLIIVFFCYGRLLCAVKEAAAAQQESETTQRAEREVTRMVVIMVIAFLVCWLPYASVAWWIFTHQGSEFGPVFMTIPAFFAKSSSIYNPMIYICMNKQFRNCMITTLCCGKNPFEEEEGASSTASKTEASSVSSSSVSPA.

The Extracellular portion of the chain corresponds to 1–36 (MNGTEGPYFYIPMVNTTGIVRSPYDYPQYYLVNPAA). Asparagine 2 and asparagine 15 each carry an N-linked (GlcNAc...) asparagine glycan. The helical transmembrane segment at 37–61 (YAALGAYMFFLILVGFPINFLTLYV) threads the bilayer. Residues 62–73 (TIEHKKLRTPLN) lie on the Cytoplasmic side of the membrane. The chain crosses the membrane as a helical span at residues 74-96 (YILLNLAVANLFMVFGGFTTTMY). Topologically, residues 97 to 110 (TSMHGYFVLGRLGC) are extracellular. Cysteine 110 and cysteine 187 are disulfide-bonded. Residues 111-133 (NLEGFFATLGGEIALWSLVVLAV) form a helical membrane-spanning segment. The short motif at 134–136 (ERW) is the 'Ionic lock' involved in activated form stabilization element. The Cytoplasmic segment spans residues 134–152 (ERWMVVCKPISNFRFGENH). The chain crosses the membrane as a helical span at residues 153–173 (AIMGLAMTWLMASACAVPPLV). The Extracellular segment spans residues 174–202 (GWSRYIPEGMQCSCGVDYYTRAEGFNNES). N-linked (GlcNAc...) asparagine glycosylation occurs at asparagine 200. The chain crosses the membrane as a helical span at residues 203–224 (FVVYMFCCHFMIPLIIVFFCYG). Over 225–252 (RLLCAVKEAAAAQQESETTQRAEREVTR) the chain is Cytoplasmic. A helical membrane pass occupies residues 253–274 (MVVIMVIAFLVCWLPYASVAWW). Residues 275 to 286 (IFTHQGSEFGPV) lie on the Extracellular side of the membrane. Residues 287–308 (FMTIPAFFAKSSSIYNPMIYIC) traverse the membrane as a helical segment. Lysine 296 is modified (N6-(retinylidene)lysine). At 309–354 (MNKQFRNCMITTLCCGKNPFEEEEGASSTASKTEASSVSSSSVSPA) the chain is on the cytoplasmic side. S-palmitoyl cysteine attachment occurs at residues cysteine 322 and cysteine 323. Residues 329-354 (EEEEGASSTASKTEASSVSSSSVSPA) form a disordered region. A compositionally biased stretch (low complexity) spans 334–354 (ASSTASKTEASSVSSSSVSPA).

This sequence belongs to the G-protein coupled receptor 1 family. Opsin subfamily. Post-translationally, phosphorylated on some or all of the serine and threonine residues present in the C-terminal region. Contains one covalently linked retinal chromophore.

Its subcellular location is the membrane. It is found in the cell projection. The protein localises to the cilium. It localises to the photoreceptor outer segment. In terms of biological role, photoreceptor required for image-forming vision at low light intensity. While most salt water fish species use retinal as chromophore, most freshwater fish use 3-dehydroretinal, or a mixture of retinal and 3-dehydroretinal. Light-induced isomerization of 11-cis to all-trans retinal triggers a conformational change that activates signaling via G-proteins. Subsequent receptor phosphorylation mediates displacement of the bound G-protein alpha subunit by arrestin and terminates signaling. In Mullus surmuletus (Striped red mullet), this protein is Rhodopsin (rho).